The following is a 543-amino-acid chain: Protein lin-14 (543 aa).

Disordered stretches follow at residues 165-228 (PNGH…SSNH) and 268-291 (APAT…PRKP). Positions 177–213 (SMQTDEQQVKWSSPSSVDSNGQKTDSSAASAGDNQNI) are enriched in polar residues. The segment covering 268–282 (APATNGTTNGATKAA) has biased composition (low complexity).

In terms of processing, cleaved by caspase ced-3 in vitro.

It is found in the nucleus. Functionally, heterochronic protein which controls the choice of stage specific cell fates. Involved in the temporal progression of vulval fate patterning, possibly by inhibiting lin-12. Acts as a transcription factor involved in the stage-specific repression of insulin/insulin-like growth factor gene ins-33. The polypeptide is Protein lin-14 (lin-14) (Caenorhabditis briggsae).